The sequence spans 360 residues: Phosphoserine aminotransferase (360 aa).

Arginine 42 provides a ligand contact to L-glutamate. Residues alanine 76–serine 77, tryptophan 102, threonine 152, aspartate 172, and glutamine 195 each bind pyridoxal 5'-phosphate. Lysine 196 is modified (N6-(pyridoxal phosphate)lysine). Residue asparagine 237–threonine 238 participates in pyridoxal 5'-phosphate binding.

This sequence belongs to the class-V pyridoxal-phosphate-dependent aminotransferase family. SerC subfamily. In terms of assembly, homodimer. It depends on pyridoxal 5'-phosphate as a cofactor.

It localises to the cytoplasm. The catalysed reaction is O-phospho-L-serine + 2-oxoglutarate = 3-phosphooxypyruvate + L-glutamate. It carries out the reaction 4-(phosphooxy)-L-threonine + 2-oxoglutarate = (R)-3-hydroxy-2-oxo-4-phosphooxybutanoate + L-glutamate. It participates in amino-acid biosynthesis; L-serine biosynthesis; L-serine from 3-phospho-D-glycerate: step 2/3. In terms of biological role, catalyzes the reversible conversion of 3-phosphohydroxypyruvate to phosphoserine and of 3-hydroxy-2-oxo-4-phosphonooxybutanoate to phosphohydroxythreonine. The polypeptide is Phosphoserine aminotransferase (Bacillus thuringiensis subsp. konkukian (strain 97-27)).